We begin with the raw amino-acid sequence, 229 residues long: Uracil-DNA glycosylase (229 aa).

Aspartate 67 functions as the Proton acceptor in the catalytic mechanism.

This sequence belongs to the uracil-DNA glycosylase (UDG) superfamily. UNG family.

It localises to the cytoplasm. It carries out the reaction Hydrolyzes single-stranded DNA or mismatched double-stranded DNA and polynucleotides, releasing free uracil.. Functionally, excises uracil residues from the DNA which can arise as a result of misincorporation of dUMP residues by DNA polymerase or due to deamination of cytosine. In Coxiella burnetii (strain RSA 493 / Nine Mile phase I), this protein is Uracil-DNA glycosylase.